Consider the following 259-residue polypeptide: E3 ubiquitin-protein ligase RNF170 (259 aa).

Residues 1-25 (MAKYQGEVQSLKLDDDSVIEGVSDQ) lie on the Lumenal side of the membrane. The helical transmembrane segment at 26 to 46 (VLVAVVVSLALIATLVYALFS) threads the bilayer. At 47–202 (RNAHQNIHPE…GGLFWMFRIR (156 aa)) the chain is on the cytoplasmic side. The RING-type zinc finger occupies 88 to 131 (CPICLHQASLPVETNCGHLFCGTCIVAYWRYGSWLGAISCPICR). The helical transmembrane segment at 203–223 (IILCLMGAFFYLISPLDFVPE) threads the bilayer. Alanine 224 is a topological domain (lumenal). The chain crosses the membrane as a helical span at residues 225 to 245 (LFGILGFLDDFFVIFLLLIYI). Residues 246–259 (SIMYREVITQRLNR) are Cytoplasmic-facing.

In terms of assembly, constitutively associated with the ERLIN1/ERLIN 2 complex. Interacts with activated ITPR1.

The protein localises to the endoplasmic reticulum membrane. It catalyses the reaction S-ubiquitinyl-[E2 ubiquitin-conjugating enzyme]-L-cysteine + [acceptor protein]-L-lysine = [E2 ubiquitin-conjugating enzyme]-L-cysteine + N(6)-ubiquitinyl-[acceptor protein]-L-lysine.. It participates in protein modification; protein ubiquitination. E3 ubiquitin-protein ligase. Plays an essential role in stimulus-induced inositol 1,4,5-trisphosphate receptor type 1 (ITPR1) ubiquitination and degradation via the endoplasmic reticulum-associated degradation (ERAD) pathway. Also involved in ITPR1 turnover in resting cells. Selectively inhibits the TLR3-triggered innate immune response by promoting the 'Lys-48'-linked polyubiquitination and degradation of TLR3. In Bos taurus (Bovine), this protein is E3 ubiquitin-protein ligase RNF170 (RNF170).